Here is a 215-residue protein sequence, read N- to C-terminus: Small ribosomal subunit protein eS1 (215 aa).

Belongs to the eukaryotic ribosomal protein eS1 family.

This chain is Small ribosomal subunit protein eS1, found in Thermoplasma volcanium (strain ATCC 51530 / DSM 4299 / JCM 9571 / NBRC 15438 / GSS1).